A 309-amino-acid chain; its full sequence is MKSSVLMTALCVAGSLAAEQISPPNEVVVTAKKVVVVTTTVTTTIPCPTVIPTTSYKPEPTSKPPVIPPVPTSSAEPLPPPPVEPSTIPCPEPGTSTYAPPPPPPPPTSAPAPPAPPPPPPSSAPAPPAPPPSQPSQGPAPPPPPPGKDYKEVAGYHHNVHRSNHSAPALTWSSALESSARKLAESCNYGHDTSIDGGGYGQNIGYQSGYNNVAALLTEQMYNEEAILFEGNYGNNNPSNFHSWGHFTQMVWIGTTHVGCFTAHCSNLGGQGSGGDAYYTVCNYSPPGNVLGQYAENVKPPKGQPVVTV.

A signal peptide spans M1–A17. Residues C47 to E59 are compositionally biased toward low complexity. Residues C47 to E152 form a disordered region. Pro residues-rich tracts occupy residues T61 to E92 and A99 to G147. Residues A154–Y284 form the SCP domain. The N-linked (GlcNAc...) asparagine glycan is linked to N164.

It belongs to the CRISP family.

It localises to the secreted. Secreted protein required for efficient export of lipids such as acetylated sterols. Acts in detoxification of hydrophobic compounds. This is Probable pathogenesis-related protein ARB_02861 from Arthroderma benhamiae (strain ATCC MYA-4681 / CBS 112371) (Trichophyton mentagrophytes).